A 52-amino-acid polypeptide reads, in one-letter code: UPF0391 membrane protein Tgr7_2500 (52 aa).

The next 2 membrane-spanning stretches (helical) occupy residues 4-24 and 29-49; these read WALIFLIVAIIAGTLGFSGVA and WIAQVLFLVFLALLVISLLGG.

Belongs to the UPF0391 family.

The protein resides in the cell membrane. The chain is UPF0391 membrane protein Tgr7_2500 from Thioalkalivibrio sulfidiphilus (strain HL-EbGR7).